A 130-amino-acid chain; its full sequence is Small ribosomal subunit protein uS13 (130 aa).

Basic residues predominate over residues 97-116 (PVRGQRTKTNARTRRGKRKT). A disordered region spans residues 97–130 (PVRGQRTKTNARTRRGKRKTVGAGKSTSSIKRVK). Polar residues predominate over residues 121 to 130 (KSTSSIKRVK).

The protein belongs to the universal ribosomal protein uS13 family. As to quaternary structure, part of the 30S ribosomal subunit. Forms a loose heterodimer with protein S19. Forms two bridges to the 50S subunit in the 70S ribosome.

Functionally, located at the top of the head of the 30S subunit, it contacts several helices of the 16S rRNA. In the 70S ribosome it contacts the 23S rRNA (bridge B1a) and protein L5 of the 50S subunit (bridge B1b), connecting the 2 subunits; these bridges are implicated in subunit movement. Contacts the tRNAs in the A and P-sites. This Endomicrobium trichonymphae protein is Small ribosomal subunit protein uS13.